The following is a 126-amino-acid chain: Major sperm protein 3 (126 aa).

The residue at position 2 (A2) is an N-acetylalanine. The MSP domain maps to 8–125 (DIATMPAQKV…RRKNLPIEYN (118 aa)).

In terms of tissue distribution, sperm.

Its subcellular location is the cell projection. It is found in the pseudopodium. The protein resides in the cytoplasm. It localises to the cytoskeleton. Its function is as follows. Central component in molecular interactions underlying sperm crawling. Forms an extensive filament system that extends from sperm villipoda, along the leading edge of the pseudopod. In Globodera rostochiensis (Golden nematode worm), this protein is Major sperm protein 3 (MSP-3).